Reading from the N-terminus, the 360-residue chain is Flavin-dependent trigonelline monooxygenase, oxygenase component (360 aa).

It belongs to the bacterial luciferase oxidoreductase family. Homodimer. The trigonelline monooxygenase is composed of a reductase component TgnA and an oxygenase component TgnB.

It carries out the reaction N-methylnicotinate + FMNH2 + O2 = (Z)-2-((N-methylformamido)methylene)-5-hydroxybutanolactone + FMN + H(+). The catalysed reaction is N-methylnicotinate + FADH2 + O2 = (Z)-2-((N-methylformamido)methylene)-5-hydroxybutanolactone + FAD + H(+). Its function is as follows. Involved in the degradation of the pyridine ring of trigonelline (TG; N-methylnicotinate) into succinate and methylamine as carbon and nitrogen sources, respectively. Catalyzes the insertion of two oxygens, followed by a ring cleavage of trigonelline to yield (Z)-2-((N-methylformamido)methylene)-5-hydroxybutyrolactone (MFMB). It is able to use reduced FMN or FAD. The chain is Flavin-dependent trigonelline monooxygenase, oxygenase component from Acinetobacter baylyi (strain ATCC 33305 / BD413 / ADP1).